We begin with the raw amino-acid sequence, 90 residues long: Secretoglobin family 1D member 1 (90 aa).

The N-terminal stretch at 1–21 is a signal peptide; the sequence is MRLSVCLLLLTLALCCYRANA.

In terms of assembly, heterodimer of a lipophilin A and a lipophilin C (mammaglobin B) monomer associated head to head. As to expression, expressed in lachrymal gland, thymus, kidney, testis, ovary and salivary gland.

It is found in the secreted. May bind androgens and other steroids, may also bind estramustine, a chemotherapeutic agent used for prostate cancer. May be under transcriptional regulation of steroid hormones. The polypeptide is Secretoglobin family 1D member 1 (SCGB1D1) (Homo sapiens (Human)).